Reading from the N-terminus, the 248-residue chain is Probable transcriptional regulatory protein Dde_2325 (248 aa).

Residues 1-15 (MAGHSKWKNIQHRKG) show a composition bias toward basic residues. Residues 1–22 (MAGHSKWKNIQHRKGRQDAKKS) form a disordered region.

Belongs to the TACO1 family.

The protein localises to the cytoplasm. In Oleidesulfovibrio alaskensis (strain ATCC BAA-1058 / DSM 17464 / G20) (Desulfovibrio alaskensis), this protein is Probable transcriptional regulatory protein Dde_2325.